The primary structure comprises 934 residues: Intimin (934 aa).

Residues Met-1–Ala-39 form the signal peptide. Residues Asn-40 to Thr-153 form a peptidoglycan-binding region. The tract at residues Asn-40–Thr-153 is sufficient for homodimerization. The tract at residues Asn-40–Thr-212 is required for periplasmic localization. Residues Leu-63–Leu-112 form the LysM domain. Residues Tyr-210–Phe-411 are inverse autotransporter. The tract at residues Leu-402–Phe-411 is signature sequence for beta-barrel assembly machinery (BAM), which recognizes the unfolded beta-barrel in the periplasm. The segment at Leu-437–Lys-449 is minimum linker residues necessary for formation of a heat-modifiable beta-barrel. Big-1 domains lie at Val-560–Phe-653 and Ile-660–Phe-753. Positions Ala-747–Glu-934 are intimin receptor Tir-binding. Positions Ala-787–Ser-833 constitute a BIG2 domain. Cys-858 and Cys-932 form a disulfide bridge.

Belongs to the intimin/invasin family. As to quaternary structure, homodimer. Interacts with Tir.

It is found in the cell outer membrane. Functionally, an inverse autotransporter. Adhesin, which mediates attachment to the human intestine epithelial cells. Necessary for the production of attaching and effacing lesions on infected human tissue culture cells. Anchored to the outer membrane by binding to peptidoglycan (PGN) via its periplasmic domain, thus helping in receptor interactions during host invasion. PGN-binding may also aid in resisting mechanical and chemical stress during transit of the bacterium through the gastrointestinal tract of the host. The chain is Intimin from Escherichia coli O157:H7.